The sequence spans 290 residues: Oxaloacetate decarboxylase (290 aa).

S53 contributes to the substrate binding site. Mg(2+) is bound at residue D91. Residues R162 and H238 each coordinate substrate.

The protein belongs to the isocitrate lyase/PEP mutase superfamily. Oxaloacetate decarboxylase family. As to quaternary structure, homotetramer; dimer of dimers. The cofactor is Mg(2+).

The enzyme catalyses oxaloacetate + H(+) = pyruvate + CO2. Its function is as follows. Catalyzes the decarboxylation of oxaloacetate into pyruvate. Seems to play a role in maintaining cellular concentrations of bicarbonate and pyruvate. This chain is Oxaloacetate decarboxylase, found in Ectopseudomonas mendocina (strain ymp) (Pseudomonas mendocina).